Reading from the N-terminus, the 912-residue chain is Cadherin-2 (912 aa).

Positions 1–28 (MCRIAGTPPRILPPLALMLLAALQQAPI) are cleaved as a signal peptide. The propeptide occupies 29–164 (KATCEDMLCK…DSSHLKRQKR (136 aa)). Cadherin domains lie at 165–272 (DWVI…RPEF), 273–387 (LHQV…PPEF), 388–502 (TAMT…SPYF), 503–609 (VPNP…DNAP), and 610–720 (QVNP…DVDR). The Extracellular segment spans residues 165–729 (DWVIPPINLP…RIVGAGLGTG (565 aa)). Glu-175, Asp-231, Glu-233, Asp-264, Met-265, Asn-266, Asp-267, and Asn-268 together coordinate Ca(2+). Asn-278 carries an N-linked (GlcNAc...) asparagine glycan. Ca(2+) contacts are provided by Asp-298, Asp-300, and Asn-306. Residue Asn-330 is glycosylated (N-linked (GlcNAc...) asparagine). Asp-358 is a Ca(2+) binding site. Asn-407, Asn-578, Asn-628, and Asn-657 each carry an N-linked (GlcNAc...) asparagine glycan. The chain crosses the membrane as a helical span at residues 730–752 (AIIAILLCIIILLILVLMFVVWM). Residues 753–912 (KRRDKERQAK…LADMYGGGDD (160 aa)) are Cytoplasmic-facing. Positions 869-886 (SGSTAGSLSSLNSSSSGG) are enriched in low complexity. The disordered stretch occupies residues 869 to 890 (SGSTAGSLSSLNSSSSGGEQDY).

In terms of assembly, homodimer (via extracellular region). Can also form heterodimers with other cadherins (via extracellular region). Dimerization occurs in trans, i.e. with a cadherin chain from another cell. Interacts with CTNNA2. Expressed at intercalated disks in the heart (at protein level).

Its subcellular location is the cell membrane. It is found in the sarcolemma. The protein resides in the cell junction. It localises to the cell surface. The protein localises to the desmosome. Its subcellular location is the adherens junction. In terms of biological role, calcium-dependent cell adhesion protein; preferentially mediates homotypic cell-cell adhesion. Cadherins may thus contribute to the sorting of heterogeneous cell types, and thereby play an important role during embryonic development. Required for proper neurite branching, and pre- and postsynaptic organization. The polypeptide is Cadherin-2 (CDH2) (Gallus gallus (Chicken)).